A 271-amino-acid polypeptide reads, in one-letter code: Eukaryotic translation initiation factor 3 subunit G (271 aa).

3 disordered regions span residues 1-26, 63-119, and 147-187; these read MSTTVIGSWADAGDEFSAPDITTNPD, AQRK…AQKL, and TTSS…RDDS. Ser77 is modified (phosphoserine). The region spanning 188–267 is the RRM domain; sequence TTLKVSQLNS…LILHLEWSKK (80 aa).

It belongs to the eIF-3 subunit G family. In terms of assembly, component of the eukaryotic translation initiation factor 3 (eIF-3) complex.

It is found in the cytoplasm. Its function is as follows. RNA-binding component of the eukaryotic translation initiation factor 3 (eIF-3) complex, which is involved in protein synthesis of a specialized repertoire of mRNAs and, together with other initiation factors, stimulates binding of mRNA and methionyl-tRNAi to the 40S ribosome. The eIF-3 complex specifically targets and initiates translation of a subset of mRNAs involved in cell proliferation. This subunit can bind 18S rRNA. The polypeptide is Eukaryotic translation initiation factor 3 subunit G (Scheffersomyces stipitis (strain ATCC 58785 / CBS 6054 / NBRC 10063 / NRRL Y-11545) (Yeast)).